The primary structure comprises 1577 residues: MAP kinase-activating death domain protein (1577 aa).

Residues 13–267 (YLVIVGARHP…VPVSGQKRVD (255 aa)) form the uDENN domain. The span at 106–121 (KEKVEGGAGPRGKEGA) shows a compositional bias: basic and acidic residues. Positions 106-166 (KEKVEGGAGP…WGKRRAKAGS (61 aa)) are disordered. A compositionally biased stretch (low complexity) spans 123–140 (TSGASEEAATGSSESGST). Residues 141 to 156 (LQPPSADSTPDINQSP) are compositionally biased toward polar residues. At serine 155 the chain carries Phosphoserine. In terms of domain architecture, cDENN spans 288-428 (RFTLVDFPLH…ESLELKKHLK (141 aa)). A dDENN domain is found at 430-564 (ALASMSLNTQ…LNPSNYAFQR (135 aa)). Disordered regions lie at residues 604–635 (LSVP…SSYS) and 676–840 (QPQK…NSTE). Residues 614–629 (SDPTEDSGSDSQDYDD) show a composition bias toward acidic residues. Phosphoserine is present on residues serine 688 and serine 691. Over residues 688 to 698 (SENSQENPPLR) the composition is skewed to polar residues. The segment covering 699–715 (SSSSTTASSSPSTVVHS) has biased composition (low complexity). Residues 793–803 (PRFSQHVSGSR) show a composition bias toward polar residues. Serine 812, serine 817, and serine 819 each carry phosphoserine. Over residues 826–839 (RASSPNSTVSNNST) the composition is skewed to low complexity. Residues serine 857, serine 861, serine 915, serine 920, serine 929, and serine 1058 each carry the phosphoserine modification. 3 disordered regions span residues 912 to 940 (QKSS…SSEN), 1050 to 1109 (KEPD…DTRS), and 1127 to 1272 (EVKK…RSSE). Over residues 928-938 (SSPQGRSSNSS) the composition is skewed to low complexity. Phosphothreonine is present on residues threonine 1060 and threonine 1065. Serine 1109 is modified (phosphoserine). Over residues 1127 to 1141 (EVKKQKALEKQRPEG) the composition is skewed to basic and acidic residues. The segment covering 1157–1172 (QMSADSGVSLTSASQR) has biased composition (polar residues). The span at 1189–1203 (SSSQDSEVSTVSNSS) shows a compositional bias: low complexity. Positions 1232–1248 (SRATLSDSEIETNSATS) are enriched in polar residues. Threonine 1235 is modified (phosphothreonine). A phosphoserine mark is found at serine 1237 and serine 1266. Residues 1336-1411 (GMDQGPQEMI…GLVYSQQVNE (76 aa)) form the Death domain.

This sequence belongs to the MADD family. In terms of assembly, interacts (via death domain) with TNFRSF1A (via death domain). Interacts with PIDD1. Interacts with YWHAZ. Interacts (via death domain) with KIF1B; links the motor KIF1B to Rab3-carrying vesicles in anterograde synaptic vesicle transport. Interacts with KIF1A. Interacts (via uDENN domain) with RAB3A, RAB3B, RAB3C and RAB3D; the GTP-bound form of the Rab proteins is preferred for interaction. As to expression, expressed in the brain.

It localises to the cell membrane. The protein resides in the cytoplasm. Its subcellular location is the cell projection. The protein localises to the axon. Its function is as follows. Guanyl-nucleotide exchange factor that regulates small GTPases of the Rab family. Converts GDP-bound inactive form of RAB27A and RAB27B to the GTP-bound active forms. Converts GDP-bound inactive form of RAB3A, RAB3C and RAB3D to the GTP-bound active forms, GTPases involved in synaptic vesicle exocytosis and vesicle secretion. Plays a role in synaptic vesicle formation and in vesicle trafficking at the neuromuscular junction. Involved in up-regulating a post-docking step of synaptic exocytosis in central synapses. Probably by binding to the motor proteins KIF1B and KIF1A, mediates motor-dependent transport of GTP-RAB3A-positive vesicles to the presynaptic nerve terminals. Plays a role in TNFA-mediated activation of the MAPK pathway, including ERK1/2. May link TNFRSF1A with MAP kinase activation. May be involved in the regulation of TNFA-induced apoptosis. This chain is MAP kinase-activating death domain protein, found in Mus musculus (Mouse).